The following is a 566-amino-acid chain: Class II hydrophobin FOXG_02748 (566 aa).

A signal peptide spans 1–22 (MKSKSIMAASTVMELALAQASA). Intrachain disulfides connect cysteine 497–cysteine 546, cysteine 507–cysteine 537, cysteine 508–cysteine 520, and cysteine 547–cysteine 558.

This sequence belongs to the cerato-ulmin hydrophobin family. In terms of assembly, homodimer. Homodimers further self-assemble to form highly ordered films at water-air interfaces through intermolecular interactions.

Its subcellular location is the secreted. The protein resides in the cell wall. In terms of biological role, aerial growth, conidiation, and dispersal of filamentous fungi in the environment rely upon a capability of their secreting small amphipathic proteins called hydrophobins (HPBs) with low sequence identity. Class I can self-assemble into an outermost layer of rodlet bundles on aerial cell surfaces, conferring cellular hydrophobicity that supports fungal growth, development and dispersal; whereas Class II form highly ordered films at water-air interfaces through intermolecular interactions but contribute nothing to the rodlet structure. FOXG_02748 is a class II hydrophobin that is likely required for plant colonization. In Fusarium oxysporum f. sp. lycopersici (strain 4287 / CBS 123668 / FGSC 9935 / NRRL 34936) (Fusarium vascular wilt of tomato), this protein is Class II hydrophobin FOXG_02748.